The chain runs to 520 residues: Laccase (520 aa).

The signal sequence occupies residues 1-21; it reads MHTFLRSTALVVAGLSARALA. Plastocyanin-like domains are found at residues 22-148 and 160-304; these read SIGP…FVVY and VDDD…ILRY. An N-linked (GlcNAc...) asparagine glycan is attached at Asn-75. 4 residues coordinate Cu cation: His-85, His-87, His-130, and His-132. 2 disulfides stabilise this stretch: Cys-106/Cys-509 and Cys-138/Cys-227. Asn-352 and Asn-402 each carry an N-linked (GlcNAc...) asparagine glycan. The Plastocyanin-like 3 domain occupies 373–496; the sequence is TVPVLLQILS…VFAEDIPDVA (124 aa). 7 residues coordinate Cu cation: His-418, His-421, His-423, His-473, Cys-474, His-475, and His-479.

Belongs to the multicopper oxidase family. It depends on Cu cation as a cofactor.

Its subcellular location is the secreted. The catalysed reaction is 4 hydroquinone + O2 = 4 benzosemiquinone + 2 H2O. Its function is as follows. Lignin degradation and detoxification of lignin-derived products. This chain is Laccase (LAC), found in Phlebia radiata (White-rot fungus).